Reading from the N-terminus, the 90-residue chain is MAQQTQSEIRYLTPPSVDVKKKKYCRFKKSGIRYIDYKDPEFLKKFLNEQGKILPRRITGTSLKFQRRIAQAVKRARHLALLPYVTDMMK.

Belongs to the bacterial ribosomal protein bS18 family. Part of the 30S ribosomal subunit. Forms a tight heterodimer with protein bS6.

Functionally, binds as a heterodimer with protein bS6 to the central domain of the 16S rRNA, where it helps stabilize the platform of the 30S subunit. This Bacteroides thetaiotaomicron (strain ATCC 29148 / DSM 2079 / JCM 5827 / CCUG 10774 / NCTC 10582 / VPI-5482 / E50) protein is Small ribosomal subunit protein bS18.